The chain runs to 331 residues: POU domain, class 4, transcription factor 3 (331 aa).

Residues 81 to 97 show a composition bias toward low complexity; the sequence is TSSSSTVPISHPSSNLP. Residues 81-108 form a disordered region; sequence TSSSSTVPISHPSSNLPSHHHHHLSHQT. The POU-specific domain maps to 172–249; sequence DVESDPRELE…VLQAWLEEAE (78 aa). Residues 267–326 constitute a DNA-binding region (homeobox); the sequence is RKRKRTSIAAPEKRSLEAYFAIQPRPSSEKIAAIAEKLDLKKNVVRVWFCNQRQKQKRMK.

This sequence belongs to the POU transcription factor family. Class-4 subfamily. In terms of assembly, interaction with ISL1. As to expression, expressed in the nervous system. Expressed in the otic vesicle during embryogenesis. Expressed in the adult retina in a subset of retinal ganglion cells (RGCs), and at a lower level in the adult tectum. Not expressed in the adult olfactory bulb.

The protein resides in the nucleus. The protein localises to the cytoplasm. Functionally, acts as a transcriptional activator. Acts by binding to sequences related to the consensus octamer motif 5'-ATGCAAAT-3' in the regulatory regions of its target genes. May play a role in specifying terminally differentiated neuronal phenotypes. This is POU domain, class 4, transcription factor 3 (pou4f3) from Danio rerio (Zebrafish).